Consider the following 65-residue polypeptide: Large ribosomal subunit protein bL35 (65 aa).

Residues 1–26 (MPKMKTNKSAQKRFKKTGSGRFKCKQ) form a disordered region. Positions 10-26 (AQKRFKKTGSGRFKCKQ) are enriched in basic residues.

Belongs to the bacterial ribosomal protein bL35 family.

This Hydrogenovibrio crunogenus (strain DSM 25203 / XCL-2) (Thiomicrospira crunogena) protein is Large ribosomal subunit protein bL35.